The following is a 203-amino-acid chain: Urease accessory protein UreG (203 aa).

14–21 contacts GTP; it reads GPVGSGKT.

It belongs to the SIMIBI class G3E GTPase family. UreG subfamily. Homodimer. UreD, UreF and UreG form a complex that acts as a GTP-hydrolysis-dependent molecular chaperone, activating the urease apoprotein by helping to assemble the nickel containing metallocenter of UreC. The UreE protein probably delivers the nickel.

Its subcellular location is the cytoplasm. Functionally, facilitates the functional incorporation of the urease nickel metallocenter. This process requires GTP hydrolysis, probably effectuated by UreG. The chain is Urease accessory protein UreG from Rhizobium johnstonii (strain DSM 114642 / LMG 32736 / 3841) (Rhizobium leguminosarum bv. viciae).